Consider the following 105-residue polypeptide: Chloroacetanilide N-alkylformylase 1, ferredoxin component (105 aa).

Residues 2–105 enclose the 2Fe-2S ferredoxin-type domain; the sequence is PTIIVTTRDG…GLRVAIAPED (104 aa). Positions 40, 46, 49, and 86 each coordinate [2Fe-2S] cluster.

The protein belongs to the adrenodoxin/putidaredoxin family. The chloroacetanilide N-alkylformylase multicomponent enzyme system is composed of an oxygenase component (CndA) and an electron transfer component formed by a ferredoxin reductase (CndC1) and a ferredoxin (CndB1). In vitro, chloroacetanilide N-alkylformylase assays in which CndB1 is substituted for CndB2 demonstrate that the two enzymes possess nearly identical activities. It depends on [2Fe-2S] cluster as a cofactor.

Its function is as follows. Component of the chloroacetanilide N-alkylformylase multicomponent enzyme system involved in the degradation of chloroacetanilide herbicides (N-alkoxyalkyl-N-chloroacetyl-substituted aniline derivatives). In vitro, functions as an intermediate electron transfer protein. The chain is Chloroacetanilide N-alkylformylase 1, ferredoxin component from Rhizorhabdus wittichii (strain DC-6 / KACC 16600) (Sphingomonas wittichii).